Here is a 227-residue protein sequence, read N- to C-terminus: Probable septum site-determining protein MinC (227 aa).

It belongs to the MinC family. Interacts with MinD and FtsZ.

Functionally, cell division inhibitor that blocks the formation of polar Z ring septums. Rapidly oscillates between the poles of the cell to destabilize FtsZ filaments that have formed before they mature into polar Z rings. Prevents FtsZ polymerization. The protein is Probable septum site-determining protein MinC of Geobacillus kaustophilus (strain HTA426).